The following is a 251-amino-acid chain: Octanoyltransferase (251 aa).

Residues 56–237 (ADTGDEIWVV…RLIANLDGES (182 aa)) form the BPL/LPL catalytic domain. Substrate-binding positions include 96-103 (RGGQITYH), 168-170 (ALG), and 181-183 (GLS). Catalysis depends on cysteine 199, which acts as the Acyl-thioester intermediate.

Belongs to the LipB family.

It is found in the cytoplasm. It carries out the reaction octanoyl-[ACP] + L-lysyl-[protein] = N(6)-octanoyl-L-lysyl-[protein] + holo-[ACP] + H(+). It participates in protein modification; protein lipoylation via endogenous pathway; protein N(6)-(lipoyl)lysine from octanoyl-[acyl-carrier-protein]: step 1/2. Catalyzes the transfer of endogenously produced octanoic acid from octanoyl-acyl-carrier-protein onto the lipoyl domains of lipoate-dependent enzymes. Lipoyl-ACP can also act as a substrate although octanoyl-ACP is likely to be the physiological substrate. This chain is Octanoyltransferase, found in Burkholderia ambifaria (strain ATCC BAA-244 / DSM 16087 / CCUG 44356 / LMG 19182 / AMMD) (Burkholderia cepacia (strain AMMD)).